Reading from the N-terminus, the 201-residue chain is Lipopolysaccharide core heptose(II)-phosphate phosphatase (201 aa).

The N-terminal stretch at 1 to 35 is a signal peptide; the sequence is MLAFILRFIKNKSYFALLAGAWVIIAGLTSQHAWS.

This sequence belongs to the phosphoglycerate mutase family. Ais subfamily.

Its subcellular location is the periplasm. It functions in the pathway bacterial outer membrane biogenesis; lipopolysaccharide metabolism. Functionally, catalyzes the dephosphorylation of heptose(II) of the outer membrane lipopolysaccharide core. This chain is Lipopolysaccharide core heptose(II)-phosphate phosphatase, found in Salmonella arizonae (strain ATCC BAA-731 / CDC346-86 / RSK2980).